Here is a 285-residue protein sequence, read N- to C-terminus: MTMSSFLINSNYIEPKFPPFEEFAPHGGPGGGDGAVGGGPGYPRPQSAPHLPAPNPHAARQPPAYYAPRAREPSYPGGLYPAPAAACPYACRGASPGRPEQSPAPGAHPSPAPQPPVPLGHCAPGPTTPAVATGGSAPACPLLLADQGPAGPKGKEPVVYPWMKKIHVSAVNSSYNGGEPKRSRTAYTRQQVLELEKEFHFNRYLTRRRRIEIAHTLCLSERQVKIWFQNRRMKWKKDHKLPNTKMRSSNTASAPAGPPGKAQTHSPHHHPHPLPGASTPIPSSI.

Disordered regions lie at residues 19 to 70 (PFEE…APRA) and 94 to 130 (ASPG…TTPA). The span at 27–41 (GGPGGGDGAVGGGPG) shows a compositional bias: gly residues. A compositionally biased stretch (low complexity) spans 44-70 (RPQSAPHLPAPNPHAARQPPAYYAPRA). Residues 106–118 (GAHPSPAPQPPVP) are compositionally biased toward pro residues. Residues 159 to 164 (VYPWMK) carry the Antp-type hexapeptide motif. Positions 180-239 (PKRSRTAYTRQQVLELEKEFHFNRYLTRRRRIEIAHTLCLSERQVKIWFQNRRMKWKKDH) form a DNA-binding region, homeobox. Residues 238-285 (DHKLPNTKMRSSNTASAPAGPPGKAQTHSPHHHPHPLPGASTPIPSSI) form a disordered region.

The protein belongs to the Antp homeobox family. Deformed subfamily.

It is found in the nucleus. Its function is as follows. Sequence-specific transcription factor which is part of a developmental regulatory system that provides cells with specific positional identities on the anterior-posterior axis. Binds to sites in the 5'-flanking sequence of its coding region with various affinities. The consensus sequences of the high and low affinity binding sites are 5'-TAATGA[CG]-3' and 5'-CTAATTTT-3'. The protein is Homeobox protein Hox-A4 (Hoxa4) of Mus musculus (Mouse).